A 317-amino-acid chain; its full sequence is Sulfate adenylyltransferase subunit 2 (317 aa).

The segment covering 1 to 10 (MSNAVHETDS) has biased composition (basic and acidic residues). 2 disordered regions span residues 1–21 (MSNA…PPLD) and 298–317 (RAID…EGYF).

This sequence belongs to the PAPS reductase family. CysD subfamily. As to quaternary structure, heterodimer composed of CysD, the smaller subunit, and CysN.

It carries out the reaction sulfate + ATP + H(+) = adenosine 5'-phosphosulfate + diphosphate. The protein operates within sulfur metabolism; hydrogen sulfide biosynthesis; sulfite from sulfate: step 1/3. Its function is as follows. With CysN forms the ATP sulfurylase (ATPS) that catalyzes the adenylation of sulfate producing adenosine 5'-phosphosulfate (APS) and diphosphate, the first enzymatic step in sulfur assimilation pathway. APS synthesis involves the formation of a high-energy phosphoric-sulfuric acid anhydride bond driven by GTP hydrolysis by CysN coupled to ATP hydrolysis by CysD. In Agrobacterium fabrum (strain C58 / ATCC 33970) (Agrobacterium tumefaciens (strain C58)), this protein is Sulfate adenylyltransferase subunit 2.